Consider the following 270-residue polypeptide: Putative carbamate hydrolase RutD (270 aa).

It belongs to the AB hydrolase superfamily. Hydrolase RutD family.

The enzyme catalyses carbamate + 2 H(+) = NH4(+) + CO2. Involved in pyrimidine catabolism. May facilitate the hydrolysis of carbamate, a reaction that can also occur spontaneously. This chain is Putative carbamate hydrolase RutD, found in Escherichia coli O44:H18 (strain 042 / EAEC).